Here is a 582-residue protein sequence, read N- to C-terminus: Trans-activating transcriptional regulatory protein (582 aa).

Residues 101–131 (QPVVEQPSPSSAYHAESFEHSAGVNQPSATG) are disordered.

The protein belongs to the nucleopolyhedrovirus IE-1 protein family. Homodimer. Interacts with helicase and LEF-3. Post-translationally, phosphorylated.

It localises to the host nucleus. Functionally, regulatory transcriptional protein, which trans-activates gene expression from early baculovirus promoters. Can also trans-activate its own promoter, suggesting an autoregulation during infection of host cells. Also promotes viral DNA genome replication via the N-terminal region. The chain is Trans-activating transcriptional regulatory protein (IE1) from Autographa californica nuclear polyhedrosis virus (AcMNPV).